The primary structure comprises 71 residues: Prokaryotic ubiquitin-like protein Pup (71 aa).

Residues 1-18 (MPEKDTGGQHRATRRTEE) are compositionally biased toward basic and acidic residues. Positions 1-36 (MPEKDTGGQHRATRRTEEHDETIDEATATSDVQERR) are disordered. Residues 27–65 (TATSDVQERREKLDADVDAILDEIDDVLEENAEEFVRSY) are ARC ATPase binding. Positions 30-59 (SDVQERREKLDADVDAILDEIDDVLEENAE) form a coiled coil. E71 participates in a covalent cross-link: Isoglutamyl lysine isopeptide (Glu-Lys) (interchain with K-? in acceptor proteins).

Belongs to the prokaryotic ubiquitin-like protein family. As to quaternary structure, strongly interacts with the proteasome-associated ATPase ARC through a hydrophobic interface; the interacting region of Pup lies in its C-terminal half. There is one Pup binding site per ARC hexamer ring.

It participates in protein degradation; proteasomal Pup-dependent pathway. Protein modifier that is covalently attached to lysine residues of substrate proteins, thereby targeting them for proteasomal degradation. The tagging system is termed pupylation. The sequence is that of Prokaryotic ubiquitin-like protein Pup from Acidothermus cellulolyticus (strain ATCC 43068 / DSM 8971 / 11B).